A 293-amino-acid polypeptide reads, in one-letter code: Ribosomal protein L11 methyltransferase (293 aa).

Residues Thr-145, Gly-166, Asp-188, and Asn-230 each contribute to the S-adenosyl-L-methionine site.

It belongs to the methyltransferase superfamily. PrmA family.

The protein resides in the cytoplasm. It carries out the reaction L-lysyl-[protein] + 3 S-adenosyl-L-methionine = N(6),N(6),N(6)-trimethyl-L-lysyl-[protein] + 3 S-adenosyl-L-homocysteine + 3 H(+). Methylates ribosomal protein L11. This chain is Ribosomal protein L11 methyltransferase, found in Shigella sonnei (strain Ss046).